The sequence spans 727 residues: 1,4-alpha-glucan branching enzyme GlgB (727 aa).

The active-site Nucleophile is D405. E458 functions as the Proton donor in the catalytic mechanism.

The protein belongs to the glycosyl hydrolase 13 family. GlgB subfamily. In terms of assembly, monomer.

The catalysed reaction is Transfers a segment of a (1-&gt;4)-alpha-D-glucan chain to a primary hydroxy group in a similar glucan chain.. Its pathway is glycan biosynthesis; glycogen biosynthesis. In terms of biological role, catalyzes the formation of the alpha-1,6-glucosidic linkages in glycogen by scission of a 1,4-alpha-linked oligosaccharide from growing alpha-1,4-glucan chains and the subsequent attachment of the oligosaccharide to the alpha-1,6 position. This is 1,4-alpha-glucan branching enzyme GlgB from Yersinia enterocolitica serotype O:8 / biotype 1B (strain NCTC 13174 / 8081).